The sequence spans 839 residues: Genome polyprotein (839 aa).

A compositionally biased stretch (polar residues) spans 55-66 (TAEVGSHQSEPL). Residues 55 to 76 (TAEVGSHQSEPLKTSVDKPGSK) form a disordered region. 2 short sequence motifs ((L)YPX(n)L motif) span residues 167 to 171 (YPHGL) and 200 to 205 (YPVWEL). Over residues 496–510 (SGGFSTTVSTEQNVP) the composition is skewed to polar residues. 2 disordered regions span residues 496 to 530 (SGGF…NKGK) and 773 to 792 (GDLE…RFES). An involved in P1-2A pentamerization region spans residues 766 to 836 (MLDRIAGGDL…RKLKGLFSQS (71 aa)). Basic and acidic residues predominate over residues 780-792 (DDPRTDEDRRFES).

Belongs to the picornaviridae polyprotein family. As to quaternary structure, homodimer. Homomultimer; probably interacts with membranes in a multimeric form. Seems to assemble into amyloid-like fibers. In terms of assembly, homopentamer. Homooligomer. Interacts with capsid protein VP2. Interacts with capsid protein VP3. As to quaternary structure, interacts with capsid protein VP1. Interacts with capsid protein VP3. In terms of assembly, interacts with capsid protein VP1. Interacts with capsid protein VP2. Post-translationally, specific enzymatic cleavages by viral protease in vivo yield a variety of precursors and mature proteins. Polyprotein processing intermediates are produced, such as P1-2A which is a functional precursor of the structural proteins, VP0 which is a VP4-VP2 precursor, VP1-2A precursor, 3ABC precursor which is a stable and catalytically active precursor of 3A, 3B and 3C proteins, 3AB and 3CD precursors. The assembly signal 2A is removed from VP1-2A by a host protease, possibly host Cathepsin L. This cleavage occurs over a region of 3 amino-acids probably generating VP1 proteins with heterogeneous C-termini. In terms of processing, during virion maturation, immature virions are rendered infectious following cleavage of VP0 into VP4 and VP2. This maturation seems to be an autocatalytic event triggered by the presence of RNA in the capsid and is followed by a conformational change of the particle. The assembly signal 2A is removed from VP1-2A by a host protease, possibly host Cathepsin L in naked virions. This cleavage does not occur in enveloped virions. This cleavage occurs over a region of 3 amino-acids probably generating VP1 proteins with heterogeneous C-termini. Post-translationally, unlike other picornaviruses, does not seem to be myristoylated.

It is found in the virion. Its subcellular location is the host endosome. The protein localises to the host multivesicular body. It localises to the host membrane. In terms of biological role, capsid proteins VP1, VP2, and VP3 form a closed capsid enclosing the viral positive strand RNA genome. All these proteins contain a beta-sheet structure called beta-barrel jelly roll. Together they form an icosahedral capsid (T=3) composed of 60 copies of each VP1, VP2, and VP3, with a diameter of approximately 300 Angstroms. VP1 is situated at the 12 fivefold axes, whereas VP2 and VP3 are located at the quasi-sixfold axes. The naked capsid interacts with the host receptor HAVCR1 to provide virion attachment to and probably entry into the target cell. Its function is as follows. VP0 precursor is a component of the immature procapsids. Plays a role in the assembly of the 12 pentamers into an icosahedral structure. Has not been detected in mature virions, supposedly owing to its small size. Functionally, precursor component of immature procapsids that corresponds to an extended form of the structural protein VP1. After maturation, possibly by the host Cathepsin L, the assembly signal 2A is cleaved to give rise to the mature VP1 protein. In terms of biological role, affects membrane integrity and causes an increase in membrane permeability. Its function is as follows. Functions as a viroporin. Affects membrane integrity and causes an increase in membrane permeability. Involved in host intracellular membrane rearrangements probably to give rise to the viral factories. Does not disrupt calcium homeostasis or glycoprotein trafficking. Antagonizes the innate immune response of the host by suppressing IFN-beta synthesis, which it achieves by interfering with the RIG-I/IFIH1 pathway. This Callithrix (Owl-faced monkey) protein is Genome polyprotein.